We begin with the raw amino-acid sequence, 130 residues long: Protein ApaG (130 aa).

Residues 3–127 (RAVTRGIEVS…FSLDIPEQRR (125 aa)) form the ApaG domain.

The protein is Protein ApaG of Brucella anthropi (strain ATCC 49188 / DSM 6882 / CCUG 24695 / JCM 21032 / LMG 3331 / NBRC 15819 / NCTC 12168 / Alc 37) (Ochrobactrum anthropi).